Reading from the N-terminus, the 200-residue chain is Potassium-transporting ATPase KdpC subunit (200 aa).

Residues 9–31 form a helical membrane-spanning segment; that stretch reads LVMLVALTALTGLVYPLAMTGVA. The tract at residues 68–97 is disordered; it reads GRPSATTAPDPQDSSKTVPSPYNAANSMGA. The segment covering 71–96 has biased composition (polar residues); that stretch reads SATTAPDPQDSSKTVPSPYNAANSMG.

This sequence belongs to the KdpC family. The system is composed of three essential subunits: KdpA, KdpB and KdpC.

Its subcellular location is the cell inner membrane. Its function is as follows. Part of the high-affinity ATP-driven potassium transport (or Kdp) system, which catalyzes the hydrolysis of ATP coupled with the electrogenic transport of potassium into the cytoplasm. This subunit acts as a catalytic chaperone that increases the ATP-binding affinity of the ATP-hydrolyzing subunit KdpB by the formation of a transient KdpB/KdpC/ATP ternary complex. The protein is Potassium-transporting ATPase KdpC subunit of Rhodopseudomonas palustris (strain BisA53).